Here is a 388-residue protein sequence, read N- to C-terminus: Succinate--CoA ligase [ADP-forming] subunit beta (388 aa).

Residues Lys9–His244 form the ATP-grasp domain. Residues Lys46, Gly53 to Gly55, Glu99, Thr102, and Glu107 each bind ATP. Mg(2+) is bound by residues Asn199 and Asp213. Residues Asn264 and Gly321–Val323 each bind substrate.

The protein belongs to the succinate/malate CoA ligase beta subunit family. Heterotetramer of two alpha and two beta subunits. Requires Mg(2+) as cofactor.

The enzyme catalyses succinate + ATP + CoA = succinyl-CoA + ADP + phosphate. The catalysed reaction is GTP + succinate + CoA = succinyl-CoA + GDP + phosphate. It functions in the pathway carbohydrate metabolism; tricarboxylic acid cycle; succinate from succinyl-CoA (ligase route): step 1/1. Succinyl-CoA synthetase functions in the citric acid cycle (TCA), coupling the hydrolysis of succinyl-CoA to the synthesis of either ATP or GTP and thus represents the only step of substrate-level phosphorylation in the TCA. The beta subunit provides nucleotide specificity of the enzyme and binds the substrate succinate, while the binding sites for coenzyme A and phosphate are found in the alpha subunit. The chain is Succinate--CoA ligase [ADP-forming] subunit beta from Pseudomonas aeruginosa (strain LESB58).